Consider the following 352-residue polypeptide: Peptide chain release factor 1 (352 aa).

Gln-230 is subject to N5-methylglutamine.

This sequence belongs to the prokaryotic/mitochondrial release factor family. In terms of processing, methylated by PrmC. Methylation increases the termination efficiency of RF1.

The protein resides in the cytoplasm. In terms of biological role, peptide chain release factor 1 directs the termination of translation in response to the peptide chain termination codons UAG and UAA. The protein is Peptide chain release factor 1 of Exiguobacterium sibiricum (strain DSM 17290 / CCUG 55495 / CIP 109462 / JCM 13490 / 255-15).